Here is a 365-residue protein sequence, read N- to C-terminus: 3-amino-4-hydroxybenzoate 4-O-methyltransferase (365 aa).

The span at 1–18 (MTVPENAQHTAPDQTQHT) shows a compositional bias: polar residues. The tract at residues 1 to 32 (MTVPENAQHTAPDQTQHTAPDRTRQAQQAAPD) is disordered. Residues aspartate 227, 253–255 (GDF), and arginine 270 each bind S-adenosyl-L-methionine. Histidine 273 (proton acceptor) is an active-site residue.

This sequence belongs to the class I-like SAM-binding methyltransferase superfamily. Cation-independent O-methyltransferase family.

It catalyses the reaction 3-amino-2,4-dihydroxybenzoate + S-adenosyl-L-methionine = 3-amino-2-hydroxy-4-methoxybenzoate + S-adenosyl-L-homocysteine + H(+). Its pathway is antibiotic biosynthesis. Its function is as follows. Part of a gene cluster involved in the biosynthesis of cremeomycin, a light-sensitive o-diazoquinone with antibacterial and antiproliferative effects. Catalyzes the methylation of the C4 hydroxyl group of 3-amino-2,4-dihydroxybenzoate (3,2,4-ADHBA) to form 3-amino-2-hydroxy-4-methoxybenzoate (3,2,4-AHMBA). In vitro, can also catalyze the methylation of 3-amino-4-hydroxybenzoate (3,4-AHBA). The sequence is that of 3-amino-4-hydroxybenzoate 4-O-methyltransferase from Streptomyces cremeus.